Consider the following 391-residue polypeptide: tRNA-specific 2-thiouridylase MnmA (391 aa).

ATP-binding positions include Gly-35 to Ser-42 and Leu-61. Cys-122 (nucleophile) is an active-site residue. Cysteines 122 and 221 form a disulfide. Gly-147 provides a ligand contact to ATP. Residues Lys-171–Gln-173 are interaction with tRNA. Residue Cys-221 is the Cysteine persulfide intermediate of the active site. The tract at residues Arg-328–Tyr-329 is interaction with tRNA.

Belongs to the MnmA/TRMU family.

The protein resides in the cytoplasm. The catalysed reaction is S-sulfanyl-L-cysteinyl-[protein] + uridine(34) in tRNA + AH2 + ATP = 2-thiouridine(34) in tRNA + L-cysteinyl-[protein] + A + AMP + diphosphate + H(+). Its function is as follows. Catalyzes the 2-thiolation of uridine at the wobble position (U34) of tRNA, leading to the formation of s(2)U34. In Synechococcus sp. (strain CC9311), this protein is tRNA-specific 2-thiouridylase MnmA.